The sequence spans 172 residues: C-phycocyanin beta chain (172 aa).

Asn72 carries the N4-methylasparagine modification. The (2R,3E)-phycocyanobilin site is built by Cys82 and Cys153.

The protein belongs to the phycobiliprotein family. As to quaternary structure, heterodimer of an alpha and a beta subunit, which further assembles into trimers and the trimers into hexamers. The basic functional unit of phycobiliproteins is a ring-shaped hexamer formed from two back-to-back trimers contacting via the alpha chain subunits. The trimers are composed of alpha/beta subunit heterodimers arranged around a three-fold axis of symmetry. The phycoerythrins also contain a gamma subunit which is located in the center of the hexamer. In terms of processing, contains two covalently linked phycocyanobilin chromophores.

It is found in the plastid. It localises to the cyanelle thylakoid membrane. Functionally, light-harvesting photosynthetic bile pigment-protein from the phycobiliprotein complex (phycobilisome, PBS). Phycocyanin is the major phycobiliprotein in the PBS rod. The sequence is that of C-phycocyanin beta chain (cpcB) from Cyanophora paradoxa.